The sequence spans 115 residues: Secapin (115 aa).

Residues 1-24 (MRFQVYILHLCFFILVVLTYLSQG) form the signal peptide. The propeptide occupies 25 to 90 (QSYTTTTTTS…STENFDITNR (66 aa)). Cysteines 99 and 110 form a disulfide.

This sequence belongs to the secapin family. As to expression, expressed in the epidermis, fat body and venom gland.

Its subcellular location is the secreted. In terms of biological role, serine protease inhibitor which exhibits antifibrinolytic, antielastolytic and antimicrobial activities. Displays antimicrobial activity against bacteria and fungi. Likely functions in the innate immune response to microbial infection and possibly in the venom, as an antifibrinolytic agent. The recombinant form inhibits trypsin (IC(50)=80.02 nM, Ki=127.25 nM), chymotrypsin (IC(50)=393.78 nM, Ki=432.59 nM), the microbial serine proteases subtilisin A (IC(50)=379.20 nM, Ki=492.77 nM) and proteinase K (IC(50)=189.43 nM, Ki=271.76 nM), plasmin (IC(50)=457.98 nM, Ki=502.91 nM), human elastase (IC(50)=347.81 nM, Ki=469.90 nM) and porcine elastase (IC(50)=94.70 nM, Ki=125.62 nM). Does not inhibit thrombin. Binds to human plasmin and inhibits the plasmin-mediated degradation of fibrin to fibrin degradation products, indicating its role as an anti-fibrinolytic agent. Also binds to bacterial and fungal surfaces. Exhibits antimicrobial activity against the Gram-positive bacteria B.thuringiensis (MIC=4.21 uM) and P.larvae (MIC=11.13 uM), the Gram-negative bacteria E.coli (MIC=6.50 uM) and the multidrug-resistant A.baumannii (MIC=5 ug/ml, MBC=10 ug/ml), as well as against the fungus B.bassiana (IC(50)=2.57 uM). The synthetic peptide also exhibits antimicrobial activity against the Gram-positive bacterium P.larvae (MIC=41.12 uM), the Gram-negative bacterium P.aeruginosa (MIC=65.75 uM), and the fungus B.bassiana (IC(50)=44.27 uM). Is also able to prevent A.baumannii biofilm formation and eliminate established A.baumannii biofilms. In vitro, does not induce an inflammatory response and has no cytotoxic activity against mammalian cells. The sequence is that of Secapin from Apis cerana (Indian honeybee).